Consider the following 1405-residue polypeptide: Protein translocase subunit SecA (1405 aa).

Residues 1–1099 (MHMKIKKFKK…SDYKKLNEDE (1099 aa)) form a protein translocase subunit SecA region. ATP contacts are provided by residues Q88, 106–110 (GEGKS), and D494. The tract at residues 1100–1405 (SDDDIKAFYK…LDYLKENNKK (306 aa)) is unknown.

It belongs to the SecA family. As to quaternary structure, monomer and homodimer. Part of the essential Sec protein translocation apparatus which comprises SecA, SecYEG and auxiliary proteins SecDF. Other proteins may also be involved.

The protein localises to the cell membrane. It localises to the cytoplasm. The catalysed reaction is ATP + H2O + cellular proteinSide 1 = ADP + phosphate + cellular proteinSide 2.. Its function is as follows. Part of the Sec protein translocase complex. Interacts with the SecYEG preprotein conducting channel. Has a central role in coupling the hydrolysis of ATP to the transfer of proteins into and across the cell membrane, serving as an ATP-driven molecular motor driving the stepwise translocation of polypeptide chains across the membrane. This is Protein translocase subunit SecA from Malacoplasma penetrans (strain HF-2) (Mycoplasma penetrans).